A 484-amino-acid chain; its full sequence is Cobyric acid synthase (484 aa).

One can recognise a GATase cobBQ-type domain in the interval 246 to 437 (ALRVVVPALP…VHGLFDTPAA (192 aa)). Cysteine 327 (nucleophile) is an active-site residue. Histidine 429 is an active-site residue.

The protein belongs to the CobB/CobQ family. CobQ subfamily.

Its pathway is cofactor biosynthesis; adenosylcobalamin biosynthesis. In terms of biological role, catalyzes amidations at positions B, D, E, and G on adenosylcobyrinic A,C-diamide. NH(2) groups are provided by glutamine, and one molecule of ATP is hydrogenolyzed for each amidation. In Paraburkholderia phymatum (strain DSM 17167 / CIP 108236 / LMG 21445 / STM815) (Burkholderia phymatum), this protein is Cobyric acid synthase.